We begin with the raw amino-acid sequence, 346 residues long: tRNA N6-adenosine threonylcarbamoyltransferase (346 aa).

2 residues coordinate Fe cation: His111 and His115. Residues 134–138 (LVSGG), Asp167, Gly180, and Asn279 contribute to the substrate site. Asp307 contributes to the Fe cation binding site.

This sequence belongs to the KAE1 / TsaD family. The cofactor is Fe(2+).

The protein localises to the cytoplasm. It carries out the reaction L-threonylcarbamoyladenylate + adenosine(37) in tRNA = N(6)-L-threonylcarbamoyladenosine(37) in tRNA + AMP + H(+). Required for the formation of a threonylcarbamoyl group on adenosine at position 37 (t(6)A37) in tRNAs that read codons beginning with adenine. Is involved in the transfer of the threonylcarbamoyl moiety of threonylcarbamoyl-AMP (TC-AMP) to the N6 group of A37, together with TsaE and TsaB. TsaD likely plays a direct catalytic role in this reaction. In Burkholderia cenocepacia (strain ATCC BAA-245 / DSM 16553 / LMG 16656 / NCTC 13227 / J2315 / CF5610) (Burkholderia cepacia (strain J2315)), this protein is tRNA N6-adenosine threonylcarbamoyltransferase.